Here is a 354-residue protein sequence, read N- to C-terminus: Arginase-2, mitochondrial (354 aa).

Residues 1–22 constitute a mitochondrion transit peptide; that stretch reads MSLRGSLSRLLQTRVHSILKKS. Positions 120, 143, 145, and 147 each coordinate Mn(2+). Substrate contacts are provided by residues 145–149, 156–158, and D202; these read HADIN and SGN. D251 and D253 together coordinate Mn(2+). T265 and E296 together coordinate substrate. A disordered region spans residues 334 to 354; that stretch reads YDQLPTPSSPDESENQARVRI.

The protein belongs to the arginase family. In terms of assembly, homotrimer. Mn(2+) is required as a cofactor. As to expression, expressed most strongly in kidney and prostate, much less strongly in the brain, skeletal muscle, placenta, lung, mammary gland, macrophage, uterus, testis and gut, but apparently not in the liver, heart and pancreas. Expressed in activated T cells.

Its subcellular location is the mitochondrion. The enzyme catalyses L-arginine + H2O = urea + L-ornithine. The protein operates within nitrogen metabolism; urea cycle; L-ornithine and urea from L-arginine: step 1/1. May play a role in the regulation of extra-urea cycle arginine metabolism and also in down-regulation of nitric oxide synthesis. Extrahepatic arginase functions to regulate L-arginine bioavailability to nitric oxid synthase (NOS). Arginine metabolism is a critical regulator of innate and adaptive immune responses. Seems to be involved in negative regulation of the survival capacity of activated CD4(+) and CD8(+) T cells. May suppress inflammation-related signaling in asthmatic airway epithelium. May contribute to the immune evasion of H.pylori by restricting M1 macrophage activation and polyamine metabolism. In fetal dendritic cells may play a role in promoting immune suppression and T cell TNF-alpha production during gestation. Regulates RPS6KB1 signaling, which promotes endothelial cell senescence and inflammation and implicates NOS3/eNOS dysfunction. Can inhibit endothelial autophagy independently of its enzymatic activity implicating mTORC2 signaling. Involved in vascular smooth muscle cell senescence and apoptosis independently of its enzymatic activity. Since NOS is found in the penile corpus cavernosum smooth muscle, the clitoral corpus cavernosum and the vagina, arginase-2 plays a role in both male and female sexual arousal. The chain is Arginase-2, mitochondrial (ARG2) from Homo sapiens (Human).